Here is a 218-residue protein sequence, read N- to C-terminus: UPF0173 metal-dependent hydrolase Mpal_1063 (218 aa).

The protein belongs to the UPF0173 family.

The chain is UPF0173 metal-dependent hydrolase Mpal_1063 from Methanosphaerula palustris (strain ATCC BAA-1556 / DSM 19958 / E1-9c).